A 375-amino-acid polypeptide reads, in one-letter code: Mitogen-activated protein kinase 1 (375 aa).

Residues 43–329 (RPPIMPIGRG…VEEALAHPYL (287 aa)) form the Protein kinase domain. Residues 49–57 (IGRGAYGIV) and Lys-72 contribute to the ATP site. Residue Asp-169 is the Proton acceptor of the active site. A Phosphothreonine modification is found at Thr-201. Positions 201 to 203 (TEY) match the TXY motif. Residue Tyr-203 is modified to Phosphotyrosine. The residue at position 206 (Thr-206) is a Phosphothreonine.

This sequence belongs to the protein kinase superfamily. CMGC Ser/Thr protein kinase family. MAP kinase subfamily. Mg(2+) serves as cofactor. In terms of processing, activated by wounding and UV-C in a cultivar-dependent manner; phosphorylated in cv. Pungchon but not in cv. Subicho.

The enzyme catalyses L-seryl-[protein] + ATP = O-phospho-L-seryl-[protein] + ADP + H(+). It carries out the reaction L-threonyl-[protein] + ATP = O-phospho-L-threonyl-[protein] + ADP + H(+). With respect to regulation, activated by threonine and tyrosine phosphorylation. Stress-inducible protein kinase involved in oxidative stress-mediated and innate immune MAP kinase signaling cascades. The protein is Mitogen-activated protein kinase 1 of Capsicum annuum (Capsicum pepper).